The sequence spans 187 residues: Probable chorismate pyruvate-lyase (187 aa).

3 residues coordinate substrate: Arg-81, Leu-119, and Glu-178.

Belongs to the UbiC family.

The protein localises to the cytoplasm. It carries out the reaction chorismate = 4-hydroxybenzoate + pyruvate. It functions in the pathway cofactor biosynthesis; ubiquinone biosynthesis. Removes the pyruvyl group from chorismate, with concomitant aromatization of the ring, to provide 4-hydroxybenzoate (4HB) for the ubiquinone pathway. This is Probable chorismate pyruvate-lyase from Thiobacillus denitrificans (strain ATCC 25259 / T1).